Reading from the N-terminus, the 284-residue chain is Nucleotide-binding protein TTE1834 (284 aa).

ATP is bound at residue 8 to 15 (GLSGAGKT). Residue 58–61 (DLRG) coordinates GTP.

The protein belongs to the RapZ-like family.

Displays ATPase and GTPase activities. This is Nucleotide-binding protein TTE1834 from Caldanaerobacter subterraneus subsp. tengcongensis (strain DSM 15242 / JCM 11007 / NBRC 100824 / MB4) (Thermoanaerobacter tengcongensis).